Here is a 154-residue protein sequence, read N- to C-terminus: 6,7-dimethyl-8-ribityllumazine synthase (154 aa).

5-amino-6-(D-ribitylamino)uracil contacts are provided by residues Phe22, 56-58, and 80-82; these read AFE and AVI. (2S)-2-hydroxy-3-oxobutyl phosphate is bound at residue 85–86; the sequence is AT. His88 (proton donor) is an active-site residue. Phe113 provides a ligand contact to 5-amino-6-(D-ribitylamino)uracil. Arg127 contributes to the (2S)-2-hydroxy-3-oxobutyl phosphate binding site.

Belongs to the DMRL synthase family.

The enzyme catalyses (2S)-2-hydroxy-3-oxobutyl phosphate + 5-amino-6-(D-ribitylamino)uracil = 6,7-dimethyl-8-(1-D-ribityl)lumazine + phosphate + 2 H2O + H(+). Its pathway is cofactor biosynthesis; riboflavin biosynthesis; riboflavin from 2-hydroxy-3-oxobutyl phosphate and 5-amino-6-(D-ribitylamino)uracil: step 1/2. Functionally, catalyzes the formation of 6,7-dimethyl-8-ribityllumazine by condensation of 5-amino-6-(D-ribitylamino)uracil with 3,4-dihydroxy-2-butanone 4-phosphate. This is the penultimate step in the biosynthesis of riboflavin. The protein is 6,7-dimethyl-8-ribityllumazine synthase of Clostridium botulinum (strain Okra / Type B1).